We begin with the raw amino-acid sequence, 544 residues long: Chaperonin GroEL (544 aa).

Residues 29–32, 86–90, glycine 413, 476–478, and aspartate 492 each bind ATP; these read TLGP, DGTTT, and NAA.

This sequence belongs to the chaperonin (HSP60) family. Forms a cylinder of 14 subunits composed of two heptameric rings stacked back-to-back. Interacts with the co-chaperonin GroES.

The protein localises to the cytoplasm. The enzyme catalyses ATP + H2O + a folded polypeptide = ADP + phosphate + an unfolded polypeptide.. Functionally, together with its co-chaperonin GroES, plays an essential role in assisting protein folding. The GroEL-GroES system forms a nano-cage that allows encapsulation of the non-native substrate proteins and provides a physical environment optimized to promote and accelerate protein folding. This chain is Chaperonin GroEL, found in Halalkalibacterium halodurans (strain ATCC BAA-125 / DSM 18197 / FERM 7344 / JCM 9153 / C-125) (Bacillus halodurans).